Consider the following 441-residue polypeptide: MNKFQLPKTLKSLWHHPHNGELISINGWVRSIRKLKNVCFAMVSDGTCQQALQVVTSPEQSKKLSYGASVNIEGQLAVSKNAKLGLQQYELLAEKIKIYGQINDDNYPIQKKHLTTEMLRQIPHLRLRTAKQGEIFRLRSDSLKALRQFFSSKDFTETNPPIITSSDCEGAGEVFTLTPQETHKNKSFERDDQKHFFDRPAFLTVSTQLHLEALALGLSRVYTISPAFRAEQSHTSRHLAEFWMLEAEVAFMTSLSQLTSLMEDMIKYTLNSLMEQNYHRDHWDQLLKPWKCMTYSEAIEELSAVKKTWKYPPKWGNDLSSEHEKYLCEILHKTPVFVTDYPQKIKPFYMKSSGPDTVAAVDLLVPQVGELAGGSLRKDHLDEYKTYPPELQWYLDLMKYSNAPHGGFGLGIERLIAFLEGENTNVKETIPFPRSVGSIFA.

It belongs to the class-II aminoacyl-tRNA synthetase family.

It localises to the mitochondrion. It catalyses the reaction tRNA(Asn) + L-asparagine + ATP = L-asparaginyl-tRNA(Asn) + AMP + diphosphate + H(+). The protein is Asparagine--tRNA ligase, mitochondrial (slm5) of Schizosaccharomyces pombe (strain 972 / ATCC 24843) (Fission yeast).